The chain runs to 156 residues: Transthyretin-like protein 1 (156 aa).

Residues 1–17 (MKIALSFLFLTSTFSNA) form the signal peptide. An N-linked (GlcNAc...) asparagine glycan is attached at Asn151.

This sequence belongs to the nematode transthyretin-like family.

It localises to the secreted. This Caenorhabditis elegans protein is Transthyretin-like protein 1 (ttr-1).